The sequence spans 480 residues: Reticulophagy regulator 1 (480 aa).

Positions 1 to 10 (MASPAPEEHA) are enriched in basic and acidic residues. The tract at residues 1-41 (MASPAPEEHATQGCPATEEQEPRPGVPGEEAGPEGAGPQVE) is disordered. Over 1–43 (MASPAPEEHATQGCPATEEQEPRPGVPGEEAGPEGAGPQVEEA) the chain is Cytoplasmic. The chain crosses the membrane as a helical span at residues 44-64 (AGRVAAALTWLLGEPVLWLGW). At 65–78 (RADELLSWKRPLRS) the chain is on the lumenal side. The interval 67–216 (DELLSWKRPL…LLFAFLCPLF (150 aa)) is reticulon homology domain. A helical transmembrane segment spans residues 79–99 (LLAFLGANLLFWFLALTPWRV). The Cytoplasmic portion of the chain corresponds to 100–101 (YH). Residues 102 to 122 (LISVMILGRVIMQIIKDMVLS) traverse the membrane as a helical segment. Residues 123 to 191 (RARGAQLWRS…LVCSVCTFFT (69 aa)) are Lumenal-facing. Phosphoserine is present on serine 132. Serine 134 is modified (phosphoserine; by CAMK2B). Serine 136 is subject to Phosphoserine. A helical membrane pass occupies residues 192-212 (ILGSYIPGVILSYLLLLFAFL). Over 213–480 (CPLFKCNDIG…GFLSNLLGGH (268 aa)) the chain is Cytoplasmic. Residues 302–313 (FNLSEGYTPQTD) show a composition bias toward polar residues. Residues 302-348 (FNLSEGYTPQTDTSDDLDRPSEEVFSRDLSDFPSLENGAGTNDEDEL) are disordered. Residues 317-331 (DLDRPSEEVFSRDLS) are compositionally biased toward basic and acidic residues. Positions 436-441 (DDFELL) match the LIR motif motif. The interval 450-480 (ESELGLTQDQGAEAQQSKKSSGFLSNLLGGH) is disordered. The segment covering 454-473 (GLTQDQGAEAQQSKKSSGFL) has biased composition (polar residues).

The protein belongs to the RETREG family. In terms of assembly, homooligomer; oligomerization is enhanced following endoplasmic reticulum stress and is mediated by the reticulon homology domain. Interacts with ATG8 family modifier proteins MAP1LC3A, MAP1LC3B, GABARAP, GABARAPL1 and GABARAPL2. Phosphorylation at Ser-134 by CAMK2B enhances oligomerization and membrane scission and reticulophagy activity.

The protein localises to the golgi apparatus. The protein resides in the cis-Golgi network membrane. Its subcellular location is the endoplasmic reticulum membrane. Functionally, endoplasmic reticulum (ER)-anchored autophagy regulator which mediates ER delivery into lysosomes through sequestration into autophagosomes. Promotes membrane remodeling and ER scission via its membrane bending capacity and targets the fragments into autophagosomes via interaction with ATG8 family proteins. Active under basal conditions. Required for collagen quality control in a LIR motif-dependent manner. Required for long-term survival of nociceptive and autonomic ganglion neurons. The chain is Reticulophagy regulator 1 from Rattus norvegicus (Rat).